We begin with the raw amino-acid sequence, 567 residues long: Urease subunit alpha (567 aa).

The Ni(2+) site is built by histidine 134, histidine 136, and lysine 217. N6-carboxylysine is present on lysine 217. Histidine 219 lines the substrate pocket. Residues histidine 246 and histidine 272 each coordinate Ni(2+). The Proton donor role is filled by histidine 320. Ni(2+) is bound at residue aspartate 360.

The protein belongs to the metallo-dependent hydrolases superfamily. Urease alpha subunit family. As to quaternary structure, heterotrimer of UreA (gamma), UreB (beta) and UreC (alpha) subunits. Three heterotrimers associate to form the active enzyme. Requires Ni cation as cofactor. In terms of processing, carboxylation allows a single lysine to coordinate two nickel ions.

The protein localises to the cytoplasm. The catalysed reaction is urea + 2 H2O + H(+) = hydrogencarbonate + 2 NH4(+). Its pathway is nitrogen metabolism; urea degradation; CO(2) and NH(3) from urea (urease route): step 1/1. The polypeptide is Urease subunit alpha (Polynucleobacter asymbioticus (strain DSM 18221 / CIP 109841 / QLW-P1DMWA-1) (Polynucleobacter necessarius subsp. asymbioticus)).